Here is a 1097-residue protein sequence, read N- to C-terminus: DNA-directed RNA polymerase subunit beta (1097 aa).

The disordered stretch occupies residues 1073-1097 (DVNPRRSTPSRPTYESLGVADYDED).

This sequence belongs to the RNA polymerase beta chain family. In cyanobacteria the RNAP catalytic core is composed of 2 alpha, 1 beta, 1 beta', 1 gamma and 1 omega subunit. When a sigma factor is associated with the core the holoenzyme is formed, which can initiate transcription.

The catalysed reaction is RNA(n) + a ribonucleoside 5'-triphosphate = RNA(n+1) + diphosphate. DNA-dependent RNA polymerase catalyzes the transcription of DNA into RNA using the four ribonucleoside triphosphates as substrates. The sequence is that of DNA-directed RNA polymerase subunit beta from Synechococcus sp. (strain CC9311).